Reading from the N-terminus, the 239-residue chain is Inner kinetochore subunit MCM22 (239 aa).

The protein belongs to the CENP-K/MCM22 family. As to quaternary structure, component of the heterotrimeric kinetochore subcomplex CTF3, which consists of CTF3, MCM16 and MCM22. The CTF3 subcomplex is part of a larger constitutive centromere-associated network (CCAN) (also known as central kinetochore CTF19 complex in yeast), which is composed of at least AME1, CHL4, CNN1, CTF3, CTF19, IML3, MCM16, MCM21, MCM22, MHF1, MHF2, MIF2, NKP1, NKP2, OKP1 and WIP1. Interacts with CTF19.

It is found in the nucleus. Its subcellular location is the chromosome. The protein localises to the centromere. It localises to the kinetochore. Component of the kinetochore, a multiprotein complex that assembles on centromeric DNA and attaches chromosomes to spindle microtubules, mediating chromosome segregation and sister chromatid segregation during meiosis and mitosis. Component of the inner kinetochore constitutive centromere-associated network (CCAN), which serves as a structural platform for outer kinetochore assembly. This is Inner kinetochore subunit MCM22 (MCM22) from Saccharomyces cerevisiae (strain ATCC 204508 / S288c) (Baker's yeast).